The following is a 379-amino-acid chain: UDP-4-amino-4-deoxy-L-arabinose--oxoglutarate aminotransferase (379 aa).

Lys-182 is modified (N6-(pyridoxal phosphate)lysine).

Belongs to the DegT/DnrJ/EryC1 family. ArnB subfamily. In terms of assembly, homodimer. Requires pyridoxal 5'-phosphate as cofactor.

The catalysed reaction is UDP-4-amino-4-deoxy-beta-L-arabinose + 2-oxoglutarate = UDP-beta-L-threo-pentopyranos-4-ulose + L-glutamate. It participates in nucleotide-sugar biosynthesis; UDP-4-deoxy-4-formamido-beta-L-arabinose biosynthesis; UDP-4-deoxy-4-formamido-beta-L-arabinose from UDP-alpha-D-glucuronate: step 2/3. Its pathway is bacterial outer membrane biogenesis; lipopolysaccharide biosynthesis. Functionally, catalyzes the conversion of UDP-4-keto-arabinose (UDP-Ara4O) to UDP-4-amino-4-deoxy-L-arabinose (UDP-L-Ara4N). The modified arabinose is attached to lipid A and is required for resistance to polymyxin and cationic antimicrobial peptides. The polypeptide is UDP-4-amino-4-deoxy-L-arabinose--oxoglutarate aminotransferase (Escherichia coli O127:H6 (strain E2348/69 / EPEC)).